Consider the following 280-residue polypeptide: Protein YibA (280 aa).

In Escherichia coli O157:H7, this protein is Protein YibA (yibA).